The sequence spans 385 residues: ELAV-like protein 4 (385 aa).

A disordered region spans residues 12 to 48 (TMEPQVSNGPTSNTSNGPSSNNRNCPSPMQTGATTDD). A compositionally biased stretch (low complexity) spans 18-33 (SNGPTSNTSNGPSSNN). The segment covering 34-48 (RNCPSPMQTGATTDD) has biased composition (polar residues). Phosphoserine is present on Ser38. RRM domains are found at residues 51–129 (TNLI…YARP) and 137–217 (ANLY…FANN). Ser233 is subject to Phosphoserine. Asymmetric dimethylarginine; by CARM1; alternate is present on Arg248. Arg248 is modified (omega-N-methylarginine; by CARM1; alternate). The region spanning 302 to 380 (WCIFVYNLSP…RVLQVSFKTN (79 aa)) is the RRM 3 domain.

This sequence belongs to the RRM elav family. As to quaternary structure, component of a TAU mRNP complex, at least composed of IGF2BP1, ELAVL4 and G3BP. Associates with the EIF4F cap-binding complex, composed of EIF4G, EIF4A, EIF4E and PABP. Within the EIF4F cap-binding complex, interacts with EIF4A. Interacts with SMN (via Tudor domain) in an RNA-independent manner; the interaction is required for localization of ELAVL4 to RNA granules. Interacts with MAP1 light chain LC1 (via C-terminus); the interaction contributes to the association of ELAVL4 with microtubules. Interacts with MAP1 light chain LC2. Methylated by CARM1, which leads to reduced RNA-binding activity and enhanced interaction with SMN. Methylation at Arg-248 by CARM1 weakens protective binding to the 3'UTR of CDKN1A mRNA and down-regulates CDKN1A protein expression, thereby maintaining cells in a proliferative state. Methylation is inhibited by NGF, which facilitates neurite outgrowth. In terms of tissue distribution, expressed in pancreatic beta cells (at protein level). Expressed in the brain.

The protein resides in the cytoplasm. It localises to the perikaryon. Its subcellular location is the cell projection. It is found in the dendrite. The protein localises to the axon. The protein resides in the growth cone. RNA-binding protein that is involved in the post-transcriptional regulation of mRNAs. Plays a role in the regulation of mRNA stability, alternative splicing and translation. Binds to AU-rich element (ARE) sequences in the 3' untranslated region (UTR) of target mRNAs, including GAP43, VEGF, FOS, CDKN1A and ACHE mRNA. Many of the target mRNAs are coding for RNA-binding proteins, transcription factors and proteins involved in RNA processing and/or neuronal development and function. By binding to the mRNA 3'UTR, decreases mRNA deadenylation and thereby contributes to the stabilization of mRNA molecules and their protection from decay. Also binds to the polyadenylated (poly(A)) tail in the 3'UTR of mRNA, thereby increasing its affinity for mRNA binding. Mainly plays a role in neuron-specific RNA processing by stabilization of mRNAs such as GAP43, ACHE and mRNAs of other neuronal proteins, thereby contributing to the differentiation of neural progenitor cells, nervous system development, learning and memory mechanisms. Involved in the negative regulation of the proliferative activity of neuronal stem cells and in the positive regulation of neuronal differentiation of neural progenitor cells. Promotes neuronal differentiation of neural stem/progenitor cells in the adult subventricular zone of the hippocampus by binding to and stabilizing SATB1 mRNA. Binds and stabilizes MSI1 mRNA in neural stem cells. Exhibits increased binding to ACHE mRNA during neuronal differentiation, thereby stabilizing ACHE mRNA and enhancing its expression. Protects CDKN1A mRNA from decay by binding to its 3'-UTR. May bind to APP and BACE1 mRNAS and the BACE1AS lncRNA and enhance their stabilization. Plays a role in neurite outgrowth and in the establishment and maturation of dendritic arbors, thereby contributing to neocortical and hippocampal circuitry function. Stabilizes GAP43 mRNA and protects it from decay during postembryonic development in the brain. By promoting the stabilization of GAP43 mRNA, plays a role in NGF-mediated neurite outgrowth. Binds to BDNF long 3'UTR mRNA, thereby leading to its stabilization and increased dendritic translation after activation of PKC. By increasing translation of BDNF after nerve injury, may contribute to nerve regeneration. Acts as a stabilizing factor by binding to the 3'UTR of NOVA1 mRNA, thereby increasing its translation and enhancing its functional activity in neuron-specific splicing. Stimulates translation of mRNA in a poly(A)- and cap-dependent manner, possibly by associating with the EIF4F cap-binding complex. May also negatively regulate translation by binding to the 5'UTR of Ins2 mRNA, thereby repressing its translation. Upon glucose stimulation, Ins2 mRNA is released from ELAVL4 and translational inhibition is abolished. Also plays a role in the regulation of alternative splicing. May regulate alternative splicing of CALCA pre-mRNA into Calcitonin and Calcitonin gene-related peptide 1 (CGRP) by competing with splicing regulator TIAR for binding to U-rich intronic sequences of CALCA pre-mRNA. This Homo sapiens (Human) protein is ELAV-like protein 4 (ELAVL4).